The primary structure comprises 647 residues: Nucleolar GTP-binding protein 1 (647 aa).

An OBG-type G domain is found at 168–340 (RTLLICGYPN…VRNKACEKLL (173 aa)). Residues 174–181 (GYPNVGKS), 220–224 (DTPGI), and 288–291 (NKTD) contribute to the GTP site. The residue at position 563 (serine 563) is a Phosphoserine. The segment at 594–647 (ADGSMRSKADRMAKMERRERNRHAKQGESDRHNAVSLSKHLFSGKRGVGKTDFR) is disordered. Basic and acidic residues predominate over residues 598 to 626 (MRSKADRMAKMERRERNRHAKQGESDRHN).

This sequence belongs to the TRAFAC class OBG-HflX-like GTPase superfamily. OBG GTPase family. NOG subfamily. As to quaternary structure, associated with nucleolar and cytoplasmic pre-60S particles. Directly interacts with RLP24.

It is found in the nucleus. The protein localises to the nucleolus. Its function is as follows. Involved in the biogenesis of the 60S ribosomal subunit. In Saccharomyces cerevisiae (strain ATCC 204508 / S288c) (Baker's yeast), this protein is Nucleolar GTP-binding protein 1 (NOG1).